We begin with the raw amino-acid sequence, 244 residues long: Uridylate kinase (244 aa).

Residue 18 to 21 (KVSG) participates in ATP binding. Gly60 provides a ligand contact to UMP. Positions 61 and 65 each coordinate ATP. UMP-binding positions include Asp80 and 141–148 (TGNPFCTT). ATP contacts are provided by Thr168, Gln169, Tyr174, and Asp177.

This sequence belongs to the UMP kinase family. In terms of assembly, homohexamer.

The protein localises to the cytoplasm. The catalysed reaction is UMP + ATP = UDP + ADP. It participates in pyrimidine metabolism; CTP biosynthesis via de novo pathway; UDP from UMP (UMPK route): step 1/1. Inhibited by UTP. Catalyzes the reversible phosphorylation of UMP to UDP. The protein is Uridylate kinase of Rickettsia typhi (strain ATCC VR-144 / Wilmington).